Consider the following 294-residue polypeptide: UDP-3-O-acyl-N-acetylglucosamine deacetylase (294 aa).

Residues His-75, His-232, and Asp-236 each contribute to the Zn(2+) site. The active-site Proton donor is the His-259.

It belongs to the LpxC family. It depends on Zn(2+) as a cofactor.

The catalysed reaction is a UDP-3-O-[(3R)-3-hydroxyacyl]-N-acetyl-alpha-D-glucosamine + H2O = a UDP-3-O-[(3R)-3-hydroxyacyl]-alpha-D-glucosamine + acetate. It participates in glycolipid biosynthesis; lipid IV(A) biosynthesis; lipid IV(A) from (3R)-3-hydroxytetradecanoyl-[acyl-carrier-protein] and UDP-N-acetyl-alpha-D-glucosamine: step 2/6. In terms of biological role, catalyzes the hydrolysis of UDP-3-O-myristoyl-N-acetylglucosamine to form UDP-3-O-myristoylglucosamine and acetate, the committed step in lipid A biosynthesis. The protein is UDP-3-O-acyl-N-acetylglucosamine deacetylase of Campylobacter hominis (strain ATCC BAA-381 / DSM 21671 / CCUG 45161 / LMG 19568 / NCTC 13146 / CH001A).